The primary structure comprises 343 residues: N-acetylornithine carbamoyltransferase (343 aa).

Residues 49–52 (SMRT), tryptophan 77, and arginine 112 contribute to the carbamoyl phosphate site. Glutamate 144 lines the N(2)-acetyl-L-ornithine pocket. 148–151 (HPCQ) is a binding site for carbamoyl phosphate. Positions 252 and 295 each coordinate N(2)-acetyl-L-ornithine. 294–295 (CL) provides a ligand contact to carbamoyl phosphate. The residue at position 302 (lysine 302) is an N6-carboxylysine. Arginine 322 lines the carbamoyl phosphate pocket.

It belongs to the aspartate/ornithine carbamoyltransferase superfamily. AOTCase family. Homotrimer.

The protein localises to the cytoplasm. It carries out the reaction N(2)-acetyl-L-ornithine + carbamoyl phosphate = N(2)-acetyl-L-citrulline + phosphate + H(+). It participates in amino-acid biosynthesis; L-arginine biosynthesis. With respect to regulation, carboxylation at Lys-302 increases the catalytic activity of the enzyme. Functionally, catalyzes the transfer of the carbamoyl group from carbamoyl phosphate to the delta-amino group of N(2)-acetyl-L-ornithine to produce N(2)-acetyl-L-citrulline. This is a step in an alternative arginine biosynthesis pathway. The enzyme has no activity with ornithine. In Xanthomonas axonopodis pv. citri (strain 306), this protein is N-acetylornithine carbamoyltransferase.